The sequence spans 71 residues: MPSIKVRENEPFDIALRRFRRTCDRAGVITDVRKKEFYEKPTWVNKRMKAAAVKRTHKEMAKNRVHRKRMY.

It belongs to the bacterial ribosomal protein bS21 family.

This Ruthia magnifica subsp. Calyptogena magnifica protein is Small ribosomal subunit protein bS21.